The primary structure comprises 206 residues: MPKVAVYNVKGEQVGEIELKDSVFGVPVNVPVMHEAVLNYLANQRQGTHSTKTRGEVRGGGRKPWRQKGTGRARQGSIRAPQWIKGGIVFGPKPRDYSYKLPKKVKRLALKSALSSKVRDNEIIVLDEFKLDQPKTKKVVELLKNFNVDSALIVVPEGEKNVELSARNIPGVKTLYANYLNTYDILKYDKFIITKDAVGIVEEVYA.

Positions 45–75 are disordered; it reads RQGTHSTKTRGEVRGGGRKPWRQKGTGRARQ. Positions 60 to 71 are enriched in basic residues; sequence GGRKPWRQKGTG.

It belongs to the universal ribosomal protein uL4 family. In terms of assembly, part of the 50S ribosomal subunit.

One of the primary rRNA binding proteins, this protein initially binds near the 5'-end of the 23S rRNA. It is important during the early stages of 50S assembly. It makes multiple contacts with different domains of the 23S rRNA in the assembled 50S subunit and ribosome. Functionally, forms part of the polypeptide exit tunnel. The sequence is that of Large ribosomal subunit protein uL4 from Thermoanaerobacter pseudethanolicus (strain ATCC 33223 / 39E) (Clostridium thermohydrosulfuricum).